The following is a 156-amino-acid chain: Protein LlR18B (156 aa).

Trans-zeatin is bound by residues Asp-8 and Asp-28. Residues Pro-32 and Ile-38 each contribute to the Ca(2+) site. Trans-zeatin-binding residues include Lys-54, Glu-133, and Lys-136.

It belongs to the BetVI family. In terms of tissue distribution, ubiquitous, with higher levels in roots.

The protein resides in the cytoplasm. The protein localises to the cytosol. Class II ribonuclease (RNase), with low activity on single-strand RNA. Binds to cytokinins. Interacts with melatonin. This chain is Protein LlR18B (LLR18B), found in Lupinus luteus (European yellow lupine).